Consider the following 490-residue polypeptide: Phosphoglucosamine mutase (490 aa).

Residue Ser139 is the Phosphoserine intermediate of the active site. Mg(2+)-binding residues include Ser139, Asp279, Asp281, and Asp283. Residue Ser139 is modified to Phosphoserine.

It belongs to the phosphohexose mutase family. Requires Mg(2+) as cofactor. Activated by phosphorylation.

It carries out the reaction alpha-D-glucosamine 1-phosphate = D-glucosamine 6-phosphate. Its function is as follows. Catalyzes the conversion of glucosamine-6-phosphate to glucosamine-1-phosphate. This Trichormus variabilis (strain ATCC 29413 / PCC 7937) (Anabaena variabilis) protein is Phosphoglucosamine mutase.